Here is a 342-residue protein sequence, read N- to C-terminus: Ribosomal RNA small subunit methyltransferase C (342 aa).

The protein belongs to the methyltransferase superfamily. RsmC family. Monomer.

Its subcellular location is the cytoplasm. The catalysed reaction is guanosine(1207) in 16S rRNA + S-adenosyl-L-methionine = N(2)-methylguanosine(1207) in 16S rRNA + S-adenosyl-L-homocysteine + H(+). In terms of biological role, specifically methylates the guanine in position 1207 of 16S rRNA in the 30S particle. The sequence is that of Ribosomal RNA small subunit methyltransferase C from Citrobacter koseri (strain ATCC BAA-895 / CDC 4225-83 / SGSC4696).